A 379-amino-acid chain; its full sequence is Subtilisin Carlsberg (379 aa).

Positions methionine 1–alanine 29 are cleaved as a signal peptide. Residues alanine 30 to leucine 105 constitute a propeptide that is removed on maturation. The region spanning phenylalanine 44–alanine 102 is the Inhibitor I9 domain. Glutamine 107 is a Ca(2+) binding site. Positions proline 110–alanine 378 constitute a Peptidase S8 domain. Aspartate 137 (charge relay system) is an active-site residue. Position 146 (aspartate 146) interacts with Ca(2+). Histidine 168 functions as the Charge relay system in the catalytic mechanism. Residues leucine 179, asparagine 181, threonine 183, valine 185, alanine 273, tyrosine 275, and valine 278 each contribute to the Ca(2+) site. Residue serine 325 is the Charge relay system of the active site.

It belongs to the peptidase S8 family. Requires Ca(2+) as cofactor.

The protein localises to the secreted. It carries out the reaction Hydrolysis of proteins with broad specificity for peptide bonds, and a preference for a large uncharged residue in P1. Hydrolyzes peptide amides.. Its activity is regulated as follows. Inhibited by p-chlorophenyl and 1-naphthyl boronic acid derivatives. Subtilisin is an extracellular alkaline serine protease, it catalyzes the hydrolysis of proteins and peptide amides. Shows high specificity for aromatic and hydrophobic amino acids in the P1 substrate position. May play an important role in the degradation of feather keratin. In Bacillus licheniformis, this protein is Subtilisin Carlsberg.